A 147-amino-acid chain; its full sequence is Hemoglobin subunit beta-2 (147 aa).

The 145-residue stretch at 3–147 (EWTDEERTII…VVSALGRQYH (145 aa)) folds into the Globin domain. H64 and H93 together coordinate heme b.

The protein belongs to the globin family. As to quaternary structure, hb 2 is a heterotetramer of two alpha-2 and two beta-2 chains. Hb 3 is a heterotetramer of two alpha-1 and two beta-2 chains. As to expression, red blood cells.

In terms of biological role, involved in oxygen transport from gills to the various peripheral tissues. This Gadus morhua (Atlantic cod) protein is Hemoglobin subunit beta-2 (hbb2).